Reading from the N-terminus, the 926-residue chain is Piwi-like protein Ago3 (926 aa).

The interval 1-62 is disordered; sequence MADPGKGRGR…PSTSGVSIGG (62 aa). The segment covering 26-56 has biased composition (low complexity); that stretch reads SPSQSESQSPESTPEQSTAPSTIASATPSTS. The PAZ domain occupies 339 to 455; that stretch reads TVLSLIKEVV…LIPELCQLTG (117 aa). A Piwi domain is found at 620 to 912; that stretch reads LVVAICSTKR…LSYLVGQCVH (293 aa). Position 672 (Gln-672) interacts with Mg(2+). Residues Asp-697, Glu-735, Asp-767, and His-901 contribute to the active site. Mg(2+) is bound at residue Leu-926.

The protein belongs to the argonaute family. Piwi subfamily. Interacts (when symmetrically methylated) with Papi/TDRKH. Interacts with Vasa. Mg(2+) is required as a cofactor. In terms of processing, arginine methylation is required for the interaction with Tudor domain-containing protein Papi/TDRKH. In terms of tissue distribution, highly expressed in the larval testis, pupal ovary and adult eggs.

Its subcellular location is the cytoplasm. Functionally, endoribonuclease that plays a central role during spermatogenesis by repressing transposable elements and preventing their mobilization, which is essential for the germline integrity. Plays an essential role in meiotic differentiation of spermatocytes, germ cell differentiation and in self-renewal of spermatogonial stem cells. Its presence in oocytes suggests that it may participate in similar functions during oogenesis in females. Acts via the piRNA metabolic process, which mediates the repression of transposable elements during meiosis by forming complexes composed of piRNAs and Piwi proteins and govern the methylation and subsequent repression of transposons. Directly binds piRNAs, a class of 24 to 30 nucleotide RNAs that are generated by a Dicer-independent mechanism and are primarily derived from transposons and other repeated sequence elements. Strongly prefers a have adenine at position 10 of their guide (g10A preference). Plays a key role in the piRNA amplification loop, also named ping-pong amplification cycle: antisense piRNA-bound Siwi and sense piRNA-bound Ago3 reciprocally cleave complementary transcripts, to couple the amplification of piRNAs with the repression of transposable elements. The chain is Piwi-like protein Ago3 (AGO3) from Bombyx mori (Silk moth).